The following is a 197-amino-acid chain: Recombination protein RecR (197 aa).

The C4-type zinc finger occupies 56 to 71 (CRLCNNFSEAEVCEVC). Residues 79–174 (RQLAVVEMPA…KVSRLARGVP (96 aa)) enclose the Toprim domain.

It belongs to the RecR family.

Its function is as follows. May play a role in DNA repair. It seems to be involved in an RecBC-independent recombinational process of DNA repair. It may act with RecF and RecO. The chain is Recombination protein RecR from Thiobacillus denitrificans (strain ATCC 25259 / T1).